The following is a 128-amino-acid chain: Large ribosomal subunit protein eL22 (128 aa).

It belongs to the eukaryotic ribosomal protein eL22 family. In terms of assembly, component of the large ribosomal subunit.

It localises to the cytoplasm. Functionally, component of the large ribosomal subunit. The ribosome is a large ribonucleoprotein complex responsible for the synthesis of proteins in the cell. The polypeptide is Large ribosomal subunit protein eL22 (rpl22) (Ictalurus punctatus (Channel catfish)).